The following is a 6306-amino-acid chain: Adhesion G-protein coupled receptor V1 (6306 aa).

Positions 1 to 29 (MSVFLGPGMPSASLLVNLLSALLILFVFG) are cleaved as a signal peptide. 22 Calx-beta domains span residues 30–117 (ETEI…FHLT), 133–237 (VTVT…IQLK), 262–362 (PVRF…HIML), 388–488 (KPYG…LQIL), 645–745 (PAIA…TLSL), 763–861 (DLII…VVLS), 876–979 (VNIT…VILL), 993–1093 (ATLR…IILL), 1108–1208 (TVII…LKLV), 1444–1544 (AMPR…FILK), 1564–1665 (TIQK…RVTL), 1710–1809 (TGLP…VELL), 1850–1952 (ILVT…VSVL), 1966–2079 (TLTV…IELL), 2107–2206 (QLII…VQLM), 2222–2324 (VIII…VQLT), 2441–2541 (TLCL…FLIS), 2584–2676 (NISP…VSLV), 2689–2789 (DTVR…QVIL), 2814–2925 (LTVE…VNLT), 2947–3048 (TAQV…LILT), and 3063–3172 (LIIV…CTLF). Over 30–5908 (ETEIRFTGQT…TDNLSSYNEA (5879 aa)) the chain is Extracellular. EAR repeat units lie at residues 3255 to 3296 (VFSV…RWQG), 3297 to 3345 (IFIP…TFTS), 3348 to 3393 (KLFL…RWNG), 3395 to 3439 (SFVL…RWSG), 3441 to 3488 (GFIN…IWEM), and 3492 to 3534 (SFRY…CWNS). Calx-beta domains follow at residues 3525–3625 (DMSA…KVQL), 3639–3739 (SVTI…IVTL), 3775–3875 (GLVG…VTIT), 3899–4006 (AEIM…ISLI), 4020–4123 (VTVV…IQLI), 4139–4239 (IIIR…EFQL), 4255–4354 (ANIT…LTIT), 4387–4489 (RIII…ILLT), 4512–4612 (SPFG…IIKL), 4634–4734 (EFGD…VIQL), 4992–5095 (SGFI…INLT), 5288–5332 (AVEE…YVFL), and 5368–5468 (IGFS…FVEL). The 157-residue stretch at 5747–5903 (SILALHWYPQ…AVYARTDNLS (157 aa)) folds into the GAIN-B domain. 2 disulfides stabilise this stretch: cysteine 5856–cysteine 5885 and cysteine 5873–cysteine 5887. The tract at residues 5856 to 5903 (CLLWNQAAASWLSDSQFCKVVEETADYVECACSHMSVYAVYARTDNLS) is GPS. The chain crosses the membrane as a helical span at residues 5909–5929 (FFTSGFICISGLCLAVLSHIF). Residues 5930 to 5939 (CARYSMFAAK) lie on the Cytoplasmic side of the membrane. Residues 5940–5960 (LLTHMMAASLGTQILFLASAY) form a helical membrane-spanning segment. The Extracellular segment spans residues 5961–5979 (ASPQLAEESCSAMAAVTHY). Residues 5980 to 6000 (LYLCQFSWMLIQSVNFWYVLV) form a helical membrane-spanning segment. At 6001-6010 (MNDEHTERRY) the chain is on the cytoplasmic side. A helical transmembrane segment spans residues 6011–6031 (LLFFLLSWGLPAFVVILLIVI). At 6032–6059 (LKGIYHQSMSQIYGLIHGDLCFIPNVYA) the chain is on the extracellular side. A helical membrane pass occupies residues 6060–6080 (ALFTAALVPLTCLVVVFVVFI). The Cytoplasmic portion of the chain corresponds to 6081-6104 (HAYQVKPQWKAYDDVFRGRTNAAE). A helical transmembrane segment spans residues 6105–6125 (IPLILYLFALISVTWLWGGLH). The Extracellular portion of the chain corresponds to 6126–6133 (MAYRHFWM). The helical transmembrane segment at 6134–6154 (LVLFVIFNSLQGLYVFMVYFI) threads the bilayer. The Cytoplasmic segment spans residues 6155–6306 (LHNQMCCPMK…RRIPIADTHL (152 aa)). The disordered stretch occupies residues 6216–6248 (ASFQQGSQASPDLKPSPQNGATFPSSGGYGQGS). A compositionally biased stretch (polar residues) spans 6217 to 6240 (SFQQGSQASPDLKPSPQNGATFPS).

It belongs to the G-protein coupled receptor 2 family. Adhesion G-protein coupled receptor (ADGR) subfamily. As to quaternary structure, forms a heterodimer, consisting of a large extracellular region (alpha subunit) non-covalently linked to a seven-transmembrane moiety (beta subunit). Component of USH2 complex, composed of ADGRV1, PDZD7, USH2A and WHRN. Interacts with USH2A and WHRN. Interacts (via the cytoplasmic region) with PDZD7. Interacts (via the cytoplasmic region) with MYO7A (via MyTH4-FERM domains). Autoproteolytically cleaved into 2 subunits, an extracellular alpha subunit and a seven-transmembrane subunit. As to expression, expressed at low levels in adult tissues.

It localises to the cell membrane. The protein localises to the cell projection. The protein resides in the stereocilium membrane. Its subcellular location is the photoreceptor inner segment. Functionally, G-protein coupled receptor which has an essential role in the development of hearing and vision. Couples to G-alpha(i)-proteins, GNAI1/2/3, G-alpha(q)-proteins, GNAQ, as well as G-alpha(s)-proteins, GNAS, inhibiting adenylate cyclase (AC) activity and cAMP production. Required for the hair bundle ankle formation, which connects growing stereocilia in developing cochlear hair cells of the inner ear. In response to extracellular calcium, activates kinases PKA and PKC to regulate myelination by inhibiting the ubiquitination of MAG, thus enhancing the stability of this protein in myelin-forming cells of the auditory pathway. In retina photoreceptors, the USH2 complex is required for the maintenance of periciliary membrane complex that seems to play a role in regulating intracellular protein transport. Involved in the regulation of bone metabolism. In terms of biological role, cleaved ADGRV1 beta-subunit couples with G-alpha(i)-proteins, GNAI1/2/3, and constitutively inhibits adenylate cyclase (AC) activity with a stronger effect than full ADGRV1. The chain is Adhesion G-protein coupled receptor V1 from Homo sapiens (Human).